A 329-amino-acid chain; its full sequence is Ketol-acid reductoisomerase (NADP(+)) (329 aa).

The KARI N-terminal Rossmann domain maps to 2-181 (VQKYYESDAD…GATRAVVFET (180 aa)). NADP(+)-binding positions include 25–28 (YGSQ), R48, S52, and 82–85 (DENQ). H107 is a catalytic residue. G133 contacts NADP(+). The KARI C-terminal knotted domain maps to 182 to 327 (TFAEETETDL…AEIRGFMPQF (146 aa)). Mg(2+) contacts are provided by D190, E194, E226, and E230. S251 is a binding site for substrate.

This sequence belongs to the ketol-acid reductoisomerase family. Mg(2+) serves as cofactor.

It carries out the reaction (2R)-2,3-dihydroxy-3-methylbutanoate + NADP(+) = (2S)-2-acetolactate + NADPH + H(+). The catalysed reaction is (2R,3R)-2,3-dihydroxy-3-methylpentanoate + NADP(+) = (S)-2-ethyl-2-hydroxy-3-oxobutanoate + NADPH + H(+). It functions in the pathway amino-acid biosynthesis; L-isoleucine biosynthesis; L-isoleucine from 2-oxobutanoate: step 2/4. Its pathway is amino-acid biosynthesis; L-valine biosynthesis; L-valine from pyruvate: step 2/4. Functionally, involved in the biosynthesis of branched-chain amino acids (BCAA). Catalyzes an alkyl-migration followed by a ketol-acid reduction of (S)-2-acetolactate (S2AL) to yield (R)-2,3-dihydroxy-isovalerate. In the isomerase reaction, S2AL is rearranged via a Mg-dependent methyl migration to produce 3-hydroxy-3-methyl-2-ketobutyrate (HMKB). In the reductase reaction, this 2-ketoacid undergoes a metal-dependent reduction by NADPH to yield (R)-2,3-dihydroxy-isovalerate. The chain is Ketol-acid reductoisomerase (NADP(+)) from Methanoculleus marisnigri (strain ATCC 35101 / DSM 1498 / JR1).